A 151-amino-acid polypeptide reads, in one-letter code: MSKVTKKVEELVKPILEKYGFDLVDIEFKKEGKKHFLRVYIDKPGGITIDDCQLVSEELSNKLDIVDPIPFSYYLEVSSPGVDRPLVNDRDFIRNKGRVVDVFLKQPIMNTTKLTGELVEKNEDVLIIMIDGENISIPFENVKKVKVAIRF.

Belongs to the RimP family.

It is found in the cytoplasm. Required for maturation of 30S ribosomal subunits. This chain is Ribosome maturation factor RimP, found in Caldicellulosiruptor saccharolyticus (strain ATCC 43494 / DSM 8903 / Tp8T 6331).